A 140-amino-acid chain; its full sequence is uncharacterized protein (140 aa).

A disordered region spans residues 121–140; sequence EEVKNGELIDPNVTTEDEKL.

This is an uncharacterized protein from Schizosaccharomyces pombe (strain 972 / ATCC 24843) (Fission yeast).